Reading from the N-terminus, the 170-residue chain is FMRFamide-like neuropeptides 6 (170 aa).

The N-terminal stretch at 1–19 (MNSRGLILTLGVVIAVAFA) is a signal peptide. The residue at position 20 (Q20) is a Pyrrolidone carboxylic acid. Residue F39 is modified to Phenylalanine amide. Positions 42–51 (SDGGNPMEME) are excised as a propeptide. F60 is modified (phenylalanine amide). Residues 63-81 (RSSGGDEQELVGGDDIDME) constitute a propeptide that is removed on maturation. At F90 the chain carries Phenylalanine amide. The propeptide occupies 93-104 (RSGPQEDDMPME). F113 bears the Phenylalanine amide mark. Positions 116-136 (RSSDMEVIGNEGVDGDAHDLF) are excised as a propeptide. Position 145 is a phenylalanine amide (F145). A propeptide spanning residues 148–159 (RSMGEEEDHDMM) is cleaved from the precursor. The disordered stretch occupies residues 150-170 (MGEEEDHDMMKRKSAYMRFGR). Basic residues predominate over residues 159–170 (MKRKSAYMRFGR). F168 carries the phenylalanine amide modification.

The protein belongs to the FARP (FMRFamide related peptide) family. As to expression, each flp gene is expressed in a distinct set of neurons. Flp-6 is expressed in the ASE sensory neurons, AFD, ASG, PVT and I1 neurons.

The protein resides in the secreted. FMRFamides and FMRFamide-like peptides are neuropeptides. KSAYMRF-amide has an excitatory effect on dissected pharyngeal myogenic muscle system. This Caenorhabditis elegans protein is FMRFamide-like neuropeptides 6.